Consider the following 183-residue polypeptide: uncharacterized protein (183 aa).

Residues 153 to 175 traverse the membrane as a helical segment; sequence LLYVFIRLFAGCLKVFRLCILWL.

It localises to the membrane. This is an uncharacterized protein from Saccharomyces cerevisiae (strain ATCC 204508 / S288c) (Baker's yeast).